Here is a 183-residue protein sequence, read N- to C-terminus: Adenine phosphoribosyltransferase (183 aa).

It belongs to the purine/pyrimidine phosphoribosyltransferase family. Homodimer.

It is found in the cytoplasm. It catalyses the reaction AMP + diphosphate = 5-phospho-alpha-D-ribose 1-diphosphate + adenine. It functions in the pathway purine metabolism; AMP biosynthesis via salvage pathway; AMP from adenine: step 1/1. Catalyzes a salvage reaction resulting in the formation of AMP, that is energically less costly than de novo synthesis. This chain is Adenine phosphoribosyltransferase, found in Blochmanniella floridana.